A 755-amino-acid chain; its full sequence is MSSQRWLWRNQHSVQTNIGSREKDLKITKTKKIKKKHERAYELLAEAAYSDPFAALGPFIDDGEGSLRVWMPGANKVELLVNGEPRVALERDGDSGFILKEQRDLHLTHYRLAVDWNGVEQIIDDPYQYHNIYQEYEHLHTPKDMYHYMGAHFVTLERGGENISGVRFLVYAPHASAVSLVGCFNQWDGRRHPMQRLDYGIWGLFIPGLEEGVQYKFELKGPNGEGLPHKQDPWGFYSEQYPSFASITYDHKRYQWQDAKWQNRAVTQKRDEALSFYELHAGSWKRDGKGDFLNYRELAEQLVPYLVDMGYTHVELMPVSEHPFYGSWGYQPVGLFAPTSRYGSPDDFKFFVDACHQAGIGVVLDWVPAHFPSDDHGLANFDGTPLFHDPDPRRGWHQDWNSYIYDLGREHVRRFLVSNALYWFEQFHIDGIRVDAVASMLYLDYSRSHDQWVPNVDGGNENYDAIATLKWMNEEVYKHFPNAMTIAEESTAFPGVSAPTFMGGLGFGFKWNMGWMHDSLSYVKEDPVHRKYHHNTITFPLVYAHSENYVLSLSHDEVVYGKGSIHNKMPGDEWQQTANLRAYYGYMYGQPGKKLNFMGAEIGQTAEWNHDDQLQWFLLEYERHQGVQKLMRDLNHLYRNEAAMHDQDCVPAGFEWRLQDEADASILAHERISKEGERILIITNFTPVPHERFRLGVPNVGQYELLLNTDDSKYGGSDFKVLTSVKTEKVESESLPQSLELRLPPLSTVFYKLHK.

D435 functions as the Nucleophile in the catalytic mechanism. The active-site Proton donor is E488.

It belongs to the glycosyl hydrolase 13 family. GlgB subfamily. As to quaternary structure, monomer.

The enzyme catalyses Transfers a segment of a (1-&gt;4)-alpha-D-glucan chain to a primary hydroxy group in a similar glucan chain.. The protein operates within glycan biosynthesis; glycogen biosynthesis. Catalyzes the formation of the alpha-1,6-glucosidic linkages in glycogen by scission of a 1,4-alpha-linked oligosaccharide from growing alpha-1,4-glucan chains and the subsequent attachment of the oligosaccharide to the alpha-1,6 position. The sequence is that of 1,4-alpha-glucan branching enzyme GlgB from Vibrio parahaemolyticus serotype O3:K6 (strain RIMD 2210633).